Here is a 316-residue protein sequence, read N- to C-terminus: C1GALT1-specific chaperone 1 (316 aa).

The Cytoplasmic portion of the chain corresponds to 1-6 (MLSESS). Residues 7–26 (SFLKGVMLGSIFCALITMLG) form a helical; Signal-anchor for type II membrane protein membrane-spanning segment. Residues 27-316 (HIRIGNRMHH…FLPPNGSEND (290 aa)) are Lumenal-facing.

Belongs to the glycosyltransferase 31 family. Beta3-Gal-T subfamily. Associates with core 1 beta-3-galactosyltransferase (C1GALT1), probably not with the soluble active form.

Its subcellular location is the membrane. Probable chaperone required for the generation of 1 O-glycan Gal-beta1-3GalNAc-alpha1-Ser/Thr (T antigen), which is a precursor for many extended O-glycans in glycoproteins. Probably acts as a specific molecular chaperone assisting the folding/stability of core 1 beta-3-galactosyltransferase (C1GALT1). In Mus musculus (Mouse), this protein is C1GALT1-specific chaperone 1 (C1galt1c1).